Reading from the N-terminus, the 99-residue chain is Large ribosomal subunit protein P1 (99 aa).

In terms of assembly, part of the 50S ribosomal subunit. Homodimer, it forms part of the ribosomal stalk which helps the ribosome interact with GTP-bound translation factors. Forms both a pentameric uL10/P0(P1)2(P1)2 and heptameric uL10/P0(P1)2(P1)2(P1)2 complex, where uL10/P0 forms an elongated spine to which the P1 dimers bind in a sequential fashion. The proportion of heptameric complexes increases during cell growth.

Its function is as follows. Forms part of the ribosomal stalk, playing a central role in the interaction of the ribosome with GTP-bound translation factors. The sequence is that of Large ribosomal subunit protein P1 from Methanococcus vannielii.